The following is a 319-amino-acid chain: Type II secretion system protein C 2 (319 aa).

The Cytoplasmic portion of the chain corresponds to 1–42 (MARVVFRDARIYLIQWLTKIRHTLNQRQSLNTDKEHLRKIVR). A helical membrane pass occupies residues 43–65 (GMFWLMLLIISAKVAHSLWRYFS). Topologically, residues 66 to 319 (FSAEYTAVSP…ARHDISIALR (254 aa)) are periplasmic.

The protein belongs to the GSP C family. As to quaternary structure, interacts with outer cell membrane protein GspD2 in the periplasm.

The protein localises to the cell inner membrane. In terms of biological role, involved in a type II secretion system (T2SS, formerly general secretion pathway, GSP) for the export of folded proteins across the outer membrane. The sequence is that of Type II secretion system protein C 2 (gspC2) from Escherichia coli O78:H11 (strain H10407 / ETEC).